The chain runs to 451 residues: Phosphoglucosamine mutase (451 aa).

Ser-102 acts as the Phosphoserine intermediate in catalysis. 4 residues coordinate Mg(2+): Ser-102, Asp-243, Asp-245, and Asp-247. Position 102 is a phosphoserine (Ser-102).

It belongs to the phosphohexose mutase family. The cofactor is Mg(2+). Activated by phosphorylation.

It catalyses the reaction alpha-D-glucosamine 1-phosphate = D-glucosamine 6-phosphate. Its function is as follows. Catalyzes the conversion of glucosamine-6-phosphate to glucosamine-1-phosphate. The chain is Phosphoglucosamine mutase from Brucella anthropi (strain ATCC 49188 / DSM 6882 / CCUG 24695 / JCM 21032 / LMG 3331 / NBRC 15819 / NCTC 12168 / Alc 37) (Ochrobactrum anthropi).